We begin with the raw amino-acid sequence, 71 residues long: Pro-MCH (71 aa).

Positions 1–20 (AKMNLSSYILILTFSLFSQG) are cleaved as a signal peptide.

This sequence belongs to the melanin-concentrating hormone family.

It localises to the secreted. In Hylobates lar (Lar gibbon), this protein is Pro-MCH (PMCH).